The following is a 635-amino-acid chain: 1-deoxy-D-xylulose-5-phosphate synthase (635 aa).

Thiamine diphosphate is bound by residues H72 and 113 to 115 (GHA). D144 is a Mg(2+) binding site. Residues 145 to 146 (GA), N174, Y286, and E369 each bind thiamine diphosphate. N174 contacts Mg(2+).

The protein belongs to the transketolase family. DXPS subfamily. As to quaternary structure, homodimer. Requires Mg(2+) as cofactor. Thiamine diphosphate serves as cofactor.

The catalysed reaction is D-glyceraldehyde 3-phosphate + pyruvate + H(+) = 1-deoxy-D-xylulose 5-phosphate + CO2. It participates in metabolic intermediate biosynthesis; 1-deoxy-D-xylulose 5-phosphate biosynthesis; 1-deoxy-D-xylulose 5-phosphate from D-glyceraldehyde 3-phosphate and pyruvate: step 1/1. Functionally, catalyzes the acyloin condensation reaction between C atoms 2 and 3 of pyruvate and glyceraldehyde 3-phosphate to yield 1-deoxy-D-xylulose-5-phosphate (DXP). This Gloeothece citriformis (strain PCC 7424) (Cyanothece sp. (strain PCC 7424)) protein is 1-deoxy-D-xylulose-5-phosphate synthase.